The primary structure comprises 785 residues: Endonuclease MutS2 (785 aa).

335 to 342 (GPNTGGKT) provides a ligand contact to ATP. The region spanning 710–785 (LDLRGERYED…GNGVTIVEFK (76 aa)) is the Smr domain.

Belongs to the DNA mismatch repair MutS family. MutS2 subfamily. Homodimer. Binds to stalled ribosomes, contacting rRNA.

Its function is as follows. Endonuclease that is involved in the suppression of homologous recombination and thus may have a key role in the control of bacterial genetic diversity. In terms of biological role, acts as a ribosome collision sensor, splitting the ribosome into its 2 subunits. Detects stalled/collided 70S ribosomes which it binds and splits by an ATP-hydrolysis driven conformational change. Acts upstream of the ribosome quality control system (RQC), a ribosome-associated complex that mediates the extraction of incompletely synthesized nascent chains from stalled ribosomes and their subsequent degradation. Probably generates substrates for RQC. The protein is Endonuclease MutS2 of Listeria monocytogenes serotype 4b (strain F2365).